The primary structure comprises 431 residues: Enolase (431 aa).

Residue Q167 coordinates (2R)-2-phosphoglycerate. Catalysis depends on E209, which acts as the Proton donor. Mg(2+) is bound by residues D246, E289, and D316. Positions 341, 370, 371, and 392 each coordinate (2R)-2-phosphoglycerate. Catalysis depends on K341, which acts as the Proton acceptor.

The protein belongs to the enolase family. In terms of assembly, component of the RNA degradosome, a multiprotein complex involved in RNA processing and mRNA degradation. Mg(2+) serves as cofactor.

Its subcellular location is the cytoplasm. It localises to the secreted. It is found in the cell surface. It catalyses the reaction (2R)-2-phosphoglycerate = phosphoenolpyruvate + H2O. The protein operates within carbohydrate degradation; glycolysis; pyruvate from D-glyceraldehyde 3-phosphate: step 4/5. Functionally, catalyzes the reversible conversion of 2-phosphoglycerate (2-PG) into phosphoenolpyruvate (PEP). It is essential for the degradation of carbohydrates via glycolysis. In Shewanella woodyi (strain ATCC 51908 / MS32), this protein is Enolase.